We begin with the raw amino-acid sequence, 398 residues long: Ubiquitin-like modifier-activating enzyme 5 (398 aa).

Residues G79, D100, K123, N146, and N180 each contribute to the ATP site. The Zn(2+) site is built by C222 and C225. The Glycyl thioester intermediate role is filled by C246. Residues C299 and C304 each coordinate Zn(2+). The UFM1-interacting sequence (UIS) motif lies at 330 to 342 (VVHEDNEWGIELV). The interval 343-373 (SEVTEAELQDASGPIPDLPEGITVAYTIPEK) is linker. The UFC1-binding sequence (UFC) motif lies at 383–398 (ETEQSLEELMAQMKKI).

The protein belongs to the ubiquitin-activating E1 family. UBA5 subfamily. Homodimer; homodimerization is required for ufm1 activation. Interacts (via UIS motif) with ufm1; binds ufm1 via a trans-binding mechanism in which ufm1 interacts with distinct sites in both subunits of the uba5 homodimer. Interacts (via C-terminus) with ufc1.

The protein localises to the cytoplasm. The protein resides in the nucleus. Its subcellular location is the endoplasmic reticulum membrane. It is found in the golgi apparatus. E1-like enzyme which specifically catalyzes the first step in ufmylation. Activates ufm1 by first adenylating its C-terminal glycine residue with ATP, and thereafter linking this residue to the side chain of a cysteine residue in E1, yielding a ufm1-E1 thioester and free AMP. Activates ufm1 via a trans-binding mechanism, in which ufm1 interacts with distinct sites in both subunits of the uba5 homodimer. Trans-binding also promotes stabilization of the uba5 homodimer, and enhances ATP-binding. Transfer of ufm1 from uba5 to the E2-like enzyme UFC1 also takes place using a trans mechanism. Ufmylation plays a key role in various processes, such as ribosome recycling, response to DNA damage, interferon response or reticulophagy (also called ER-phagy). The sequence is that of Ubiquitin-like modifier-activating enzyme 5 from Danio rerio (Zebrafish).